The following is a 217-amino-acid chain: 3-oxo-tetronate 4-phosphate decarboxylase (217 aa).

2 residues coordinate Zn(2+): His-93 and His-95. The Proton donor role is filled by Tyr-120.

It belongs to the aldolase class II family. AraD/FucA subfamily. Zn(2+) serves as cofactor.

The catalysed reaction is 3-dehydro-4-O-phospho-D-erythronate + H(+) = dihydroxyacetone phosphate + CO2. The enzyme catalyses 3-dehydro-4-O-phospho-L-erythronate + H(+) = dihydroxyacetone phosphate + CO2. In terms of biological role, catalyzes the decarboxylation of 3-oxo-tetronate 4-phosphate to dihydroxyacetone phosphate (DHAP) and CO(2). This is 3-oxo-tetronate 4-phosphate decarboxylase from Cupriavidus necator (strain ATCC 17699 / DSM 428 / KCTC 22496 / NCIMB 10442 / H16 / Stanier 337) (Ralstonia eutropha).